Consider the following 161-residue polypeptide: Anthrone oxygenase tpcL (161 aa).

N-linked (GlcNAc...) asparagine glycosylation occurs at Asn4. The next 4 helical transmembrane spans lie at 15–35 (VITGSFLSGLMMGLSVVDIPV), 56–74 (IGHKMMPSLAVTTCLLYGY), 87–107 (LPHIIAAVTTISMVPFTWLVM), and 136–155 (WAQLHAVRSLFPLMGSVLGL).

This sequence belongs to the anthrone oxygenase family. Specifically expressed in conidia.

Its subcellular location is the membrane. The enzyme catalyses emodin anthrone + O2 = emodin + H2O + H(+). Its pathway is secondary metabolite biosynthesis. Functionally, anthrone oxygenase; part of the gene cluster that mediates the biosynthesis of trypacidin, a mycotoxin with antiprotozoal activity and that plays a role in the infection process. The pathway begins with the synthesis of atrochrysone thioester by the polyketide synthase (PKS) tpcC. The atrochrysone carboxyl ACP thioesterase tpcB then breaks the thioester bond and releases the atrochrysone carboxylic acid from tpcC. The decarboxylase tpcK converts atrochrysone carboxylic acid to atrochrysone which is further reduced into emodin anthrone. The next step is performed by the emodin anthrone oxygenase tpcL that catalyzes the oxidation of emodinanthrone to emodin. Emodin O-methyltransferase encoded by tpcA catalyzes methylation of the 8-hydroxy group of emodin to form questin. Ring cleavage of questin by questin oxidase tpcI leads to desmethylsulochrin via several intermediates including questin epoxide. Another methylation step catalyzed by tpcM leads to the formation of sulochrin which is further converted to monomethylsulfochrin by tpcH. Finally, the tpcJ catalyzes the conversion of monomethylsulfochrin to trypacidin. Trypacidin is toxic for human pulmonary and bronchial epithelial cells by initiating the intracellular formation of nitric oxide (NO) and hydrogen peroxide (H(2)O(2)), thus triggering host necrotic cell death. The trypacidin pathway is also able to produce endocrocin via a distinct route from the endocrocin Enc pathway. The polypeptide is Anthrone oxygenase tpcL (Aspergillus fumigatus (strain ATCC MYA-4609 / CBS 101355 / FGSC A1100 / Af293) (Neosartorya fumigata)).